A 454-amino-acid polypeptide reads, in one-letter code: Probable ECA polymerase (454 aa).

11 helical membrane passes run 3–23 (LGQF…ILTL), 39–59 (FSML…MLVF), 61–81 (FGVA…ATAF), 119–139 (LALV…FLLF), 154–174 (GVAL…VYFL), 180–200 (AWFF…VIVG), 201–221 (GTRA…IVRG), 222–242 (WITL…MFWL), 340–360 (LVVM…GLII), 377–397 (YKAA…IVLA), and 409–429 (VFFC…YWLF).

The protein belongs to the WzyE family. As to quaternary structure, probably part of a complex composed of WzxE, WzyE and WzzE.

The protein localises to the cell inner membrane. The protein operates within bacterial outer membrane biogenesis; enterobacterial common antigen biosynthesis. Functionally, probably involved in the polymerization of enterobacterial common antigen (ECA) trisaccharide repeat units. The chain is Probable ECA polymerase from Yersinia pseudotuberculosis serotype O:1b (strain IP 31758).